Here is a 381-residue protein sequence, read N- to C-terminus: Alkanesulfonate monooxygenase (381 aa).

Belongs to the SsuD family. As to quaternary structure, homotetramer.

It carries out the reaction an alkanesulfonate + FMNH2 + O2 = an aldehyde + FMN + sulfite + H2O + 2 H(+). Functionally, catalyzes the desulfonation of aliphatic sulfonates. This Escherichia coli O7:K1 (strain IAI39 / ExPEC) protein is Alkanesulfonate monooxygenase.